A 102-amino-acid chain; its full sequence is Large ribosomal subunit protein bL21 (102 aa).

It belongs to the bacterial ribosomal protein bL21 family. In terms of assembly, part of the 50S ribosomal subunit. Contacts protein L20.

In terms of biological role, this protein binds to 23S rRNA in the presence of protein L20. The sequence is that of Large ribosomal subunit protein bL21 from Geobacter metallireducens (strain ATCC 53774 / DSM 7210 / GS-15).